The sequence spans 480 residues: Argininosuccinate lyase (480 aa).

Residues 1–17 (MTDTTPSADLGASSQQP) are compositionally biased toward polar residues. A disordered region spans residues 1-24 (MTDTTPSADLGASSQQPAKAWSGR).

It belongs to the lyase 1 family. Argininosuccinate lyase subfamily.

It is found in the cytoplasm. The catalysed reaction is 2-(N(omega)-L-arginino)succinate = fumarate + L-arginine. It functions in the pathway amino-acid biosynthesis; L-arginine biosynthesis; L-arginine from L-ornithine and carbamoyl phosphate: step 3/3. This Azoarcus sp. (strain BH72) protein is Argininosuccinate lyase.